We begin with the raw amino-acid sequence, 421 residues long: Aspartokinase (421 aa).

7-10 (KYGG) is a binding site for ATP. Substrate is bound at residue 25 to 30 (RIVATK). S41 serves as a coordination point for ATP. Residues 45-49 (DTTDD), E74, 125-126 (LE), 151-154 (RGGS), and S154 each bind substrate. Residues 174–175 (TD), 180–185 (FSADPR), and K210 contribute to the ATP site. 2 ACT domains span residues 267 to 348 (VTIV…GKVS) and 349 to 421 (LIGA…GTGR). Substrate is bound by residues D274, 274-279 (DIPGYA), 292-294 (NID), Q298, 360-361 (VT), 374-375 (NI), and 381-382 (SE).

Belongs to the aspartokinase family. Heterotetramer consisting of 2 isoforms Alpha (catalytic and regulation) and of a homodimer of 2 isoforms Beta (regulation).

The enzyme catalyses L-aspartate + ATP = 4-phospho-L-aspartate + ADP. Its pathway is amino-acid biosynthesis; L-lysine biosynthesis via DAP pathway; (S)-tetrahydrodipicolinate from L-aspartate: step 1/4. It participates in amino-acid biosynthesis; L-methionine biosynthesis via de novo pathway; L-homoserine from L-aspartate: step 1/3. The protein operates within amino-acid biosynthesis; L-threonine biosynthesis; L-threonine from L-aspartate: step 1/5. Its activity is regulated as follows. Feedback inhibition by lysine and threonine. Functionally, catalyzes the phosphorylation of the beta-carboxyl group of aspartic acid with ATP to yield 4-phospho-L-aspartate, which is involved in the branched biosynthetic pathway leading to the biosynthesis of amino acids lysine, threonine, isoleucine and methionine. The polypeptide is Aspartokinase (ask) (Mycobacterium bovis (strain ATCC BAA-935 / AF2122/97)).